Here is a 253-residue protein sequence, read N- to C-terminus: Adenylate kinase (253 aa).

Residue 15 to 20 (GSGKGT) participates in ATP binding. The tract at residues 35–64 (SSGDLLRNAVSQNTPLGQEIKSYLDQGKLL) is NMP. AMP contacts are provided by residues S36, R41, 62-64 (KLL), 103-106 (GFPR), and Q110. Residues 143–176 (SRYICPSCQGIYNKQQGFSRCPKCLVELTRRSDD) are LID. R144 serves as a coordination point for ATP. The Zn(2+) site is built by C147 and C150. 153-154 (IY) lines the ATP pocket. The Zn(2+) site is built by C163 and C166. AMP is bound by residues R173 and R184. A212 is a binding site for ATP.

This sequence belongs to the adenylate kinase family. As to quaternary structure, monomer.

It is found in the cytoplasm. It catalyses the reaction AMP + ATP = 2 ADP. It participates in purine metabolism; AMP biosynthesis via salvage pathway; AMP from ADP: step 1/1. Functionally, catalyzes the reversible transfer of the terminal phosphate group between ATP and AMP. Plays an important role in cellular energy homeostasis and in adenine nucleotide metabolism. This chain is Adenylate kinase, found in Chlamydia muridarum (strain MoPn / Nigg).